Consider the following 553-residue polypeptide: Ergothioneine transport permease/ergothioneine binding protein EgtU (553 aa).

Positions 57–236 (LAQHFIIVAL…LFSVLADKFV (180 aa)) constitute an ABC transmembrane type-1 domain. The next 6 membrane-spanning stretches (helical) occupy residues 61-81 (FIIV…IGVF), 98-118 (FLYT…IGVG), 122-142 (ALLV…YNAL), 182-202 (IAVV…AGGL), 219-239 (VAGS…VSVF), and 261-281 (VYTN…WLIP). The Periplasmic segment spans residues 282–553 (RNAIEEKPLV…AKDFLERLGL (272 aa)). An ergothioneine binding domain region spans residues 288-549 (KPLVVATKPS…PKIVAKDFLE (262 aa)).

In the N-terminal section; belongs to the binding-protein-dependent transport system permease family. The protein in the C-terminal section; belongs to the OsmX family. As to quaternary structure, the complex is composed of two ATP-binding proteins (EgtV) and two transmembrane proteins (EgtU).

Its subcellular location is the cell inner membrane. Part of the ABC transporter complex EgtUV involved in the uptake of ergothioneine (EGT), a natural low-molecular weight (LMW) thiol antioxidant which protects H.pylori against bleach stress. Responsible for the translocation of the substrate across the membrane. Also contains a C-terminal periplasmic solute-binding domain (SBD) which binds to ergothioneine with low-micromolar affinity. Cannot bind the structurally similar compounds glycine betaine, choline, proline, carnitine or histidine. The chain is Ergothioneine transport permease/ergothioneine binding protein EgtU from Helicobacter pylori (strain G27).